Consider the following 315-residue polypeptide: C1GALT1-specific chaperone 1-like protein (315 aa).

Over 1-8 the chain is Cytoplasmic; sequence MVSASGTS. The chain crosses the membrane as a helical; Signal-anchor for type II membrane protein span at residues 9-29; it reads FFKGMLLGSISWVLITMFGQI. The Lumenal portion of the chain corresponds to 30-315; the sequence is HIRHRGQTQD…FLPPVGSEND (286 aa). N-linked (GlcNAc...) asparagine glycans are attached at residues N55 and N301.

It belongs to the glycosyltransferase 31 family. Beta3-Gal-T subfamily.

It is found in the membrane. The protein is C1GALT1-specific chaperone 1-like protein of Homo sapiens (Human).